A 121-amino-acid chain; its full sequence is Large ribosomal subunit protein bL12 (121 aa).

It belongs to the bacterial ribosomal protein bL12 family. In terms of assembly, homodimer. Part of the ribosomal stalk of the 50S ribosomal subunit. Forms a multimeric L10(L12)X complex, where L10 forms an elongated spine to which 2 to 4 L12 dimers bind in a sequential fashion. Binds GTP-bound translation factors.

Forms part of the ribosomal stalk which helps the ribosome interact with GTP-bound translation factors. Is thus essential for accurate translation. This is Large ribosomal subunit protein bL12 from Vibrio cholerae serotype O1 (strain ATCC 39541 / Classical Ogawa 395 / O395).